A 790-amino-acid chain; its full sequence is Threonine--tRNA ligase 2, cytoplasmic (790 aa).

A2 bears the N-acetylalanine mark. The stretch at 13 to 68 (SRLQRQEEDIRWLCAEVQRLRDEQLRGPERGQAEGPRLTREVAQLQAENRDLHQRL) forms a coiled coil. The disordered stretch occupies residues 80–117 (RTEAGRAAAHEPPTQNQEKDTKKKRLKQSEPGREVKQP). The span at 96 to 117 (QEKDTKKKRLKQSEPGREVKQP) shows a compositional bias: basic and acidic residues. In terms of domain architecture, TGS spans 148 to 210 (NVISVRVAGG…EGDSTVELLM (63 aa)). A Phosphoserine modification is found at S441. A Nuclear localization signal motif is present at residues 774–780 (KLKNLKK).

The protein belongs to the class-II aminoacyl-tRNA synthetase family. In terms of assembly, may be a component of the multisynthetase complex (MSC), a large multi-subunit complex which contains at least eight different aminoacyl-tRNA synthetases plus three auxillary subunits AIMP1, AIMP2 and EEF1E1. Interacts with the MSC components EPRS1, AIMP1, AIMP2 and KARS1. As to expression, ubiquitous (at protein level). Strongly expressed in muscle (at protein level). Moderately expressed in heart and liver (at protein level). Weakly expressed in stomach, kidney, testis, spleen, brain, fat and lung (at protein level).

It is found in the cytoplasm. The protein resides in the nucleus. It carries out the reaction tRNA(Thr) + L-threonine + ATP = L-threonyl-tRNA(Thr) + AMP + diphosphate + H(+). Functionally, catalyzes the attachment of threonine to tRNA(Thr) in a two-step reaction: threonine is first activated by ATP to form Thr-AMP and then transferred to the acceptor end of tRNA(Thr). Also edits incorrectly charged tRNA(Thr) via its editing domain, at the post-transfer stage. In Mus musculus (Mouse), this protein is Threonine--tRNA ligase 2, cytoplasmic (Tars3).